The following is a 376-amino-acid chain: N-acetyldiaminopimelate deacetylase (376 aa).

Residue D69 is part of the active site. The active-site Proton acceptor is E128.

Belongs to the peptidase M20A family. N-acetyldiaminopimelate deacetylase subfamily.

It carries out the reaction N-acetyl-(2S,6S)-2,6-diaminopimelate + H2O = (2S,6S)-2,6-diaminopimelate + acetate. The protein operates within amino-acid biosynthesis; L-lysine biosynthesis via DAP pathway; LL-2,6-diaminopimelate from (S)-tetrahydrodipicolinate (acetylase route): step 3/3. In terms of biological role, catalyzes the conversion of N-acetyl-diaminopimelate to diaminopimelate and acetate. The polypeptide is N-acetyldiaminopimelate deacetylase (Streptococcus pneumoniae (strain 70585)).